Reading from the N-terminus, the 293-residue chain is 4-diphosphocytidyl-2-C-methyl-D-erythritol kinase (293 aa).

Residue Lys16 is part of the active site. 99-109 (PMGAGLGGGSS) provides a ligand contact to ATP. The active site involves Asp141.

Belongs to the GHMP kinase family. IspE subfamily.

The enzyme catalyses 4-CDP-2-C-methyl-D-erythritol + ATP = 4-CDP-2-C-methyl-D-erythritol 2-phosphate + ADP + H(+). It participates in isoprenoid biosynthesis; isopentenyl diphosphate biosynthesis via DXP pathway; isopentenyl diphosphate from 1-deoxy-D-xylulose 5-phosphate: step 3/6. In terms of biological role, catalyzes the phosphorylation of the position 2 hydroxy group of 4-diphosphocytidyl-2C-methyl-D-erythritol. The chain is 4-diphosphocytidyl-2-C-methyl-D-erythritol kinase from Burkholderia ambifaria (strain MC40-6).